We begin with the raw amino-acid sequence, 493 residues long: Endoglucanase 23 (493 aa).

An N-terminal signal peptide occupies residues 1 to 23; that stretch reads MKASIYLVTVFILLLLLLPTAIP. The active-site Nucleophile is the aspartate 78. N-linked (GlcNAc...) asparagine glycosylation occurs at asparagine 297. Histidine 410 is a catalytic residue. Asparagine 465 carries an N-linked (GlcNAc...) asparagine glycan. Glutamate 470 is an active-site residue.

This sequence belongs to the glycosyl hydrolase 9 (cellulase E) family.

Its subcellular location is the secreted. The catalysed reaction is Endohydrolysis of (1-&gt;4)-beta-D-glucosidic linkages in cellulose, lichenin and cereal beta-D-glucans.. This is Endoglucanase 23 from Arabidopsis thaliana (Mouse-ear cress).